The sequence spans 330 residues: Beta-ketoacyl-[acyl-carrier-protein] synthase III (330 aa).

Catalysis depends on residues Cys116 and His257. The ACP-binding stretch occupies residues 258 to 262; that stretch reads QANQR. Asn287 is an active-site residue.

It belongs to the thiolase-like superfamily. FabH family. In terms of assembly, homodimer.

Its subcellular location is the cytoplasm. The enzyme catalyses malonyl-[ACP] + acetyl-CoA + H(+) = 3-oxobutanoyl-[ACP] + CO2 + CoA. It participates in lipid metabolism; fatty acid biosynthesis. Catalyzes the condensation reaction of fatty acid synthesis by the addition to an acyl acceptor of two carbons from malonyl-ACP. Catalyzes the first condensation reaction which initiates fatty acid synthesis and may therefore play a role in governing the total rate of fatty acid production. Possesses both acetoacetyl-ACP synthase and acetyl transacylase activities. Its substrate specificity determines the biosynthesis of branched-chain and/or straight-chain of fatty acids. This is Beta-ketoacyl-[acyl-carrier-protein] synthase III from Synechocystis sp. (strain ATCC 27184 / PCC 6803 / Kazusa).